The primary structure comprises 501 residues: Aspartyl/glutamyl-tRNA(Asn/Gln) amidotransferase subunit B (501 aa).

The interval 271 to 299 (VQETRHYQETDGSTSKGRPKETAEDYRYF) is disordered. Over residues 288–299 (RPKETAEDYRYF) the composition is skewed to basic and acidic residues.

This sequence belongs to the GatB/GatE family. GatB subfamily. In terms of assembly, heterotrimer of A, B and C subunits.

The catalysed reaction is L-glutamyl-tRNA(Gln) + L-glutamine + ATP + H2O = L-glutaminyl-tRNA(Gln) + L-glutamate + ADP + phosphate + H(+). It catalyses the reaction L-aspartyl-tRNA(Asn) + L-glutamine + ATP + H2O = L-asparaginyl-tRNA(Asn) + L-glutamate + ADP + phosphate + 2 H(+). Functionally, allows the formation of correctly charged Asn-tRNA(Asn) or Gln-tRNA(Gln) through the transamidation of misacylated Asp-tRNA(Asn) or Glu-tRNA(Gln) in organisms which lack either or both of asparaginyl-tRNA or glutaminyl-tRNA synthetases. The reaction takes place in the presence of glutamine and ATP through an activated phospho-Asp-tRNA(Asn) or phospho-Glu-tRNA(Gln). The sequence is that of Aspartyl/glutamyl-tRNA(Asn/Gln) amidotransferase subunit B from Corynebacterium diphtheriae (strain ATCC 700971 / NCTC 13129 / Biotype gravis).